Reading from the N-terminus, the 48-residue chain is Small, acid-soluble spore protein P (48 aa).

The segment covering 1 to 12 has biased composition (basic and acidic residues); that stretch reads MTNKNDSKDMRK. The interval 1-48 is disordered; sequence MTNKNDSKDMRKNVSKGDNPGQPEPLDGSKKVKNRNHTRQKHNTSHDM. The segment covering 31–48 has biased composition (basic residues); sequence KVKNRNHTRQKHNTSHDM.

Belongs to the SspP family.

It is found in the spore core. The polypeptide is Small, acid-soluble spore protein P (Geobacillus thermodenitrificans (strain NG80-2)).